The sequence spans 249 residues: Pyridoxine 5'-phosphate synthase (249 aa).

A 3-amino-2-oxopropyl phosphate-binding site is contributed by Asn-7. Residue Asp-9–His-10 participates in 1-deoxy-D-xylulose 5-phosphate binding. Arg-18 serves as a coordination point for 3-amino-2-oxopropyl phosphate. His-43 serves as the catalytic Proton acceptor. 2 residues coordinate 1-deoxy-D-xylulose 5-phosphate: Arg-45 and His-50. The active-site Proton acceptor is Glu-70. Thr-100 is a binding site for 1-deoxy-D-xylulose 5-phosphate. The active-site Proton donor is His-198. 3-amino-2-oxopropyl phosphate-binding positions include Ala-199 and Gly-220–His-221.

The protein belongs to the PNP synthase family. In terms of assembly, homooctamer; tetramer of dimers.

It localises to the cytoplasm. It carries out the reaction 3-amino-2-oxopropyl phosphate + 1-deoxy-D-xylulose 5-phosphate = pyridoxine 5'-phosphate + phosphate + 2 H2O + H(+). It functions in the pathway cofactor biosynthesis; pyridoxine 5'-phosphate biosynthesis; pyridoxine 5'-phosphate from D-erythrose 4-phosphate: step 5/5. In terms of biological role, catalyzes the complicated ring closure reaction between the two acyclic compounds 1-deoxy-D-xylulose-5-phosphate (DXP) and 3-amino-2-oxopropyl phosphate (1-amino-acetone-3-phosphate or AAP) to form pyridoxine 5'-phosphate (PNP) and inorganic phosphate. The sequence is that of Pyridoxine 5'-phosphate synthase from Azoarcus sp. (strain BH72).